A 219-amino-acid chain; its full sequence is NADH-quinone oxidoreductase subunit C (219 aa).

It belongs to the complex I 30 kDa subunit family. In terms of assembly, NDH-1 is composed of 14 different subunits. Subunits NuoB, C, D, E, F, and G constitute the peripheral sector of the complex.

Its subcellular location is the cell inner membrane. The catalysed reaction is a quinone + NADH + 5 H(+)(in) = a quinol + NAD(+) + 4 H(+)(out). Functionally, NDH-1 shuttles electrons from NADH, via FMN and iron-sulfur (Fe-S) centers, to quinones in the respiratory chain. The immediate electron acceptor for the enzyme in this species is believed to be ubiquinone. Couples the redox reaction to proton translocation (for every two electrons transferred, four hydrogen ions are translocated across the cytoplasmic membrane), and thus conserves the redox energy in a proton gradient. The chain is NADH-quinone oxidoreductase subunit C from Methylorubrum extorquens (strain PA1) (Methylobacterium extorquens).